Consider the following 443-residue polypeptide: Glucose-6-phosphate isomerase (443 aa).

Glu-285 functions as the Proton donor in the catalytic mechanism. Catalysis depends on residues His-306 and Lys-420.

This sequence belongs to the GPI family.

The protein localises to the cytoplasm. The catalysed reaction is alpha-D-glucose 6-phosphate = beta-D-fructose 6-phosphate. It functions in the pathway carbohydrate biosynthesis; gluconeogenesis. The protein operates within carbohydrate degradation; glycolysis; D-glyceraldehyde 3-phosphate and glycerone phosphate from D-glucose: step 2/4. Its function is as follows. Catalyzes the reversible isomerization of glucose-6-phosphate to fructose-6-phosphate. This Staphylococcus saprophyticus subsp. saprophyticus (strain ATCC 15305 / DSM 20229 / NCIMB 8711 / NCTC 7292 / S-41) protein is Glucose-6-phosphate isomerase.